Reading from the N-terminus, the 597-residue chain is Elongation factor 4 (597 aa).

One can recognise a tr-type G domain in the interval 2-184 (QHIRNFSIIA…AIVARVPSPE (183 aa)). GTP is bound by residues 14–19 (DHGKST) and 131–134 (NKMD).

This sequence belongs to the TRAFAC class translation factor GTPase superfamily. Classic translation factor GTPase family. LepA subfamily.

The protein resides in the cell inner membrane. The catalysed reaction is GTP + H2O = GDP + phosphate + H(+). Functionally, required for accurate and efficient protein synthesis under certain stress conditions. May act as a fidelity factor of the translation reaction, by catalyzing a one-codon backward translocation of tRNAs on improperly translocated ribosomes. Back-translocation proceeds from a post-translocation (POST) complex to a pre-translocation (PRE) complex, thus giving elongation factor G a second chance to translocate the tRNAs correctly. Binds to ribosomes in a GTP-dependent manner. The polypeptide is Elongation factor 4 (Bordetella avium (strain 197N)).